Here is a 447-residue protein sequence, read N- to C-terminus: Phosphoglucosamine mutase (447 aa).

Ser-88 acts as the Phosphoserine intermediate in catalysis. Mg(2+) is bound by residues Ser-88, Asp-231, Asp-233, and Asp-235. Ser-88 carries the post-translational modification Phosphoserine.

It belongs to the phosphohexose mutase family. Monomer. Also forms large aggregates. Mg(2+) serves as cofactor. Post-translationally, activated by phosphorylation. Glucose-1,6-bisphosphate or fructose-1,6-bisphosphate can activate the enzyme in vitro. However, since glucose-1,6-bisphosphate is not believed to form in methanogens, the physiologically relevant activator might be a serine kinase protein.

It carries out the reaction alpha-D-glucosamine 1-phosphate = D-glucosamine 6-phosphate. In terms of biological role, catalyzes the conversion of glucosamine-6-phosphate to glucosamine-1-phosphate. Also catalyzes the isomerization of glucose-1-phosphate to glucose-6-phosphate, but at a 5-fold lower rate. This chain is Phosphoglucosamine mutase (glmM), found in Methanococcus maripaludis (strain DSM 14266 / JCM 13030 / NBRC 101832 / S2 / LL).